Here is a 514-residue protein sequence, read N- to C-terminus: Na(+)/H(+) antiporter NhaB (514 aa).

Helical transmembrane passes span 23 to 43 (LALLVFLIINPLTFFTNSFVA), 52 to 72 (IFTLAMALKCYPLLPGGLLAI), 97 to 117 (LLLMFMVAGIYFMKQLLLFIF), 120 to 140 (LLLSIRSKMVLSLAFCVAAAF), 144 to 164 (FLDALTVVAVVISVAVGFYGI), 202 to 222 (LMMHAGVGTALGGVMTMVGEP), 238 to 258 (FFLRMSPVTVPVLVCGLLTCM), 303 to 323 (AIIGVWLVTALALHLAEVGLI), 357 to 377 (LTVFFSIVAVIIDQHLFAPII), 391 to 411 (LFYLFNGLLSSISDNVFVGTI), 447 to 467 (ATPNGQAAFLFLLTSALAPLI), and 475 to 495 (VWMALPYTIILTLVGLLCVEF).

It belongs to the NhaB Na(+)/H(+) (TC 2.A.34) antiporter family.

It is found in the cell inner membrane. It carries out the reaction 2 Na(+)(in) + 3 H(+)(out) = 2 Na(+)(out) + 3 H(+)(in). In terms of biological role, na(+)/H(+) antiporter that extrudes sodium in exchange for external protons. This is Na(+)/H(+) antiporter NhaB from Salmonella arizonae (strain ATCC BAA-731 / CDC346-86 / RSK2980).